We begin with the raw amino-acid sequence, 434 residues long: Trigger factor (434 aa).

The PPIase FKBP-type domain maps to 161-246; the sequence is EDRATLDFTG…LKKVEVRELP (86 aa).

This sequence belongs to the FKBP-type PPIase family. Tig subfamily.

The protein localises to the cytoplasm. The catalysed reaction is [protein]-peptidylproline (omega=180) = [protein]-peptidylproline (omega=0). Functionally, involved in protein export. Acts as a chaperone by maintaining the newly synthesized protein in an open conformation. Functions as a peptidyl-prolyl cis-trans isomerase. This is Trigger factor from Yersinia pseudotuberculosis serotype O:1b (strain IP 31758).